The primary structure comprises 457 residues: Acetylcholine receptor subunit alpha-1-B (457 aa).

An N-terminal signal peptide occupies residues Met-1–Gly-20. Over Thr-21–Leu-230 the chain is Extracellular. Disulfide bonds link Cys-148/Cys-162 and Cys-212/Cys-213. N-linked (GlcNAc...) asparagine glycosylation occurs at Asn-161. 3 helical membrane-spanning segments follow: residues Pro-231 to Leu-255, Met-263 to Val-281, and Tyr-297 to Ile-316. The Cytoplasmic portion of the chain corresponds to Asn-317–His-428. A helical membrane pass occupies residues Ile-429 to Ala-447.

It belongs to the ligand-gated ion channel (TC 1.A.9) family. Acetylcholine receptor (TC 1.A.9.1) subfamily. Alpha-1/CHRNA1 sub-subfamily. One of the alpha chains that assemble within the acetylcholine receptor, a pentamer of two alpha chains, a beta, a delta, and a gamma or epsilon chains.

The protein resides in the postsynaptic cell membrane. It localises to the cell membrane. The enzyme catalyses K(+)(in) = K(+)(out). The catalysed reaction is Na(+)(in) = Na(+)(out). Its function is as follows. Upon acetylcholine binding, the AChR responds by an extensive change in conformation that affects all subunits and leads to opening of an ion-conducting channel across the plasma membrane. This chain is Acetylcholine receptor subunit alpha-1-B (chrna1-b), found in Xenopus laevis (African clawed frog).